A 595-amino-acid polypeptide reads, in one-letter code: Wee1-like protein kinase 1-B (595 aa).

Polar residues predominate over residues 1–17; that stretch reads MNVQPRNMNVQPRNMNV. Residues 1 to 127 are disordered; the sequence is MNVQPRNMNV…CPGTPPHKTF (127 aa). A compositionally biased stretch (pro residues) spans 111–122; sequence PTSPIPECPGTP. Thr-186 carries the phosphothreonine; by cdk1 modification. Residues 248–518 form the Protein kinase domain; that stretch reads FHELEKIGSG…SVALVKHSVL (271 aa). ATP contacts are provided by residues 254–262 and Lys-277; that span reads IGSGEFGSV. Asp-375 functions as the Proton acceptor in the catalytic mechanism. Asn-380 and Asp-412 together coordinate Mg(2+). Positions 526–563 form a coiled coil; it reads AEQLRIELDAEKFKNALLQKELKKAQIAKAAAEERAHF.

Belongs to the protein kinase superfamily. Ser/Thr protein kinase family. WEE1 subfamily. Interacts (when phosphorylated at Thr-186) with pin1. Phosphorylation at Thr-186 during M-phase by cdk1 inhibits the kinase activity and leads to interaction with pin1. In terms of tissue distribution, zygotically expressed. Present in oocytes and postgastrula embryos (at least until the tailbud stage). Expression begins at the midblastula stage and increases after the early gastrula stage.

Its subcellular location is the nucleus. The catalysed reaction is L-tyrosyl-[protein] + ATP = O-phospho-L-tyrosyl-[protein] + ADP + H(+). Its function is as follows. Acts as a zygotic negative regulator of entry into mitosis (G2 to M transition) by protecting the nucleus from cytoplasmically activated cyclin B1-complexed cdk1 before the onset of mitosis by mediating phosphorylation of cdk1 on 'Tyr-15'. Specifically phosphorylates and inactivates cyclin B1-complexed cdk1 reaching a maximum during G2 phase and a minimum as cells enter M phase. Phosphorylation of cyclin B1-cdk1 occurs exclusively on 'Tyr-15' and phosphorylation of monomeric cdk1 does not occur. The chain is Wee1-like protein kinase 1-B (wee1-b) from Xenopus laevis (African clawed frog).